A 70-amino-acid polypeptide reads, in one-letter code: Myotoxin (70 aa).

The first 22 residues, Met-1–Ala-22, serve as a signal peptide directing secretion. 3 disulfide bridges follow: Cys-26-Cys-58, Cys-33-Cys-52, and Cys-40-Cys-59.

It belongs to the crotamine-myotoxin family. In terms of assembly, monomer. As to expression, expressed by the venom gland.

Its subcellular location is the secreted. Functionally, cationic peptide that possesses multiple functions. It acts as a cell-penetrating peptide (CPP), and as a potent voltage-gated potassium channel (Kv) inhibitor. It exhibits antimicrobial activities, hind limb paralysis, and severe muscle necrosis by a non-enzymatic mechanism. This is Myotoxin from Crotalus adamanteus (Eastern diamondback rattlesnake).